A 179-amino-acid polypeptide reads, in one-letter code: Sec-independent protein translocase protein TatB (179 aa).

The chain crosses the membrane as a helical span at residues 1-21; it reads MFDLGFWEVLIIMLIGLLILG. Basic and acidic residues-rich tracts occupy residues 75-86 and 94-106; these read KDVEKNARRFEA and TFRD…DDAA. Residues 75–179 are disordered; sequence KDVEKNARRF…QGGGGEEKRQ (105 aa).

The protein belongs to the TatB family. As to quaternary structure, the Tat system comprises two distinct complexes: a TatABC complex, containing multiple copies of TatA, TatB and TatC subunits, and a separate TatA complex, containing only TatA subunits. Substrates initially bind to the TatABC complex, which probably triggers association of the separate TatA complex to form the active translocon.

The protein localises to the cell inner membrane. In terms of biological role, part of the twin-arginine translocation (Tat) system that transports large folded proteins containing a characteristic twin-arginine motif in their signal peptide across membranes. Together with TatC, TatB is part of a receptor directly interacting with Tat signal peptides. TatB may form an oligomeric binding site that transiently accommodates folded Tat precursor proteins before their translocation. The protein is Sec-independent protein translocase protein TatB of Alkalilimnicola ehrlichii (strain ATCC BAA-1101 / DSM 17681 / MLHE-1).